The primary structure comprises 146 residues: Small ribosomal subunit protein uS5 (146 aa).

One can recognise an S5 DRBM domain in the interval 8–71 (FEESIVNIGR…DNAFKNLSKV (64 aa)).

The protein belongs to the universal ribosomal protein uS5 family. As to quaternary structure, part of the 30S ribosomal subunit. Contacts proteins S4 and S8.

In terms of biological role, with S4 and S12 plays an important role in translational accuracy. Located at the back of the 30S subunit body where it stabilizes the conformation of the head with respect to the body. The polypeptide is Small ribosomal subunit protein uS5 (Sulfurimonas denitrificans (strain ATCC 33889 / DSM 1251) (Thiomicrospira denitrificans (strain ATCC 33889 / DSM 1251))).